We begin with the raw amino-acid sequence, 290 residues long: UPF0761 membrane protein YihY (290 aa).

A run of 6 helical transmembrane segments spans residues leucine 44–phenylalanine 64, valine 104–leucine 124, phenylalanine 140–isoleucine 160, isoleucine 183–isoleucine 203, alanine 210–leucine 230, and valine 244–leucine 264.

It belongs to the UPF0761 family.

It is found in the cell inner membrane. This is UPF0761 membrane protein YihY from Shigella sonnei (strain Ss046).